A 373-amino-acid chain; its full sequence is Peroxisomal biogenesis factor 3 (373 aa).

Over 1–15 (MFRSTWNFLKRHKKK) the chain is Cytoplasmic. The tract at residues 1–45 (MFRSTWNFLKRHKKKCIFLGTVLGGVYILGKYGQKKIREIQEREA) is targeting to peroxisomes. A helical membrane pass occupies residues 16 to 36 (CIFLGTVLGGVYILGKYGQKK). Over 37 to 116 (IREIQEREAA…LKIISFTRSI (80 aa)) the chain is Peroxisomal. Residues 117-140 (VAVYSTCMLVVLLRVQLNIIGGYI) traverse the membrane as a helical segment. An interaction with PEX19 region spans residues 120-136 (YSTCMLVVLLRVQLNII). The Cytoplasmic portion of the chain corresponds to 141-373 (YLDNAAVGKN…AFSTPQQLEK (233 aa)).

The protein belongs to the peroxin-3 family. In terms of assembly, interacts with PEX19.

It is found in the peroxisome membrane. Its function is as follows. Involved in peroxisome biosynthesis and integrity. Assembles membrane vesicles before the matrix proteins are translocated. As a docking factor for PEX19, is necessary for the import of peroxisomal membrane proteins in the peroxisomes. The polypeptide is Peroxisomal biogenesis factor 3 (PEX3) (Bos taurus (Bovine)).